Consider the following 505-residue polypeptide: Outer capsid protein VP5 (505 aa).

The involved in membrane permeabilization stretch occupies residues 1 to 42 (MGKFTSFLKRAGNATKRALTSDSAKKMYKLAGKTLQRVVESE).

The protein belongs to the orbivirus VP5 family.

It is found in the virion. Functionally, VP5 protein is one of the two proteins (with VP2) which constitute the virus particle outer capsid. Acts as a membrane permeabilization protein that mediates release of viral particles from endosomal compartments into the cytoplasm. Permeabilization activity is probably negatively regulated by VP2 and is triggered by endosomal degradation of VP2 and exposure to low pH. The sequence is that of Outer capsid protein VP5 (Segment-6) from African horse sickness virus (AHSV).